A 189-amino-acid polypeptide reads, in one-letter code: Interferon alpha-D (189 aa).

An N-terminal signal peptide occupies residues 1–23; the sequence is MAPAWSLLLALLLLSCNAICSLG. Disulfide bonds link Cys24-Cys122 and Cys52-Cys162.

This sequence belongs to the alpha/beta interferon family.

Its subcellular location is the secreted. Produced by macrophages, IFN-alpha have antiviral activities. Interferon stimulates the production of two enzymes: a protein kinase and an oligoadenylate synthetase. The protein is Interferon alpha-D (IFNAD) of Bos taurus (Bovine).